The following is a 328-amino-acid chain: Probable nicotianamine synthase 6 (328 aa).

Belongs to the nicotianamine synthase (NAS)-like family.

The catalysed reaction is 3 S-adenosyl-L-methionine = nicotianamine + 3 S-methyl-5'-thioadenosine + 3 H(+). Synthesizes nicotianamine, a polyamine that is the first intermediate in the synthesis of the phytosiderophores of the mugineic acid type found in gramineae which serves as a sensor for the physiological iron status within the plant, and/or might be involved in the transport of iron. The chain is Probable nicotianamine synthase 6 (NAS6) from Hordeum vulgare (Barley).